The sequence spans 394 residues: Obg-like ATPase 1 (394 aa).

An OBG-type G domain is found at 25–282 (LKIGIVGLPN…MPPDEAAKYC (258 aa)). Residues 34–39 (NVGKST), 56–60 (FCTID), and 94–97 (DIAG) contribute to the ATP site. Mg(2+) contacts are provided by Ser-38 and Thr-58. Residue Phe-129 participates in GTP binding. ATP contacts are provided by residues 230 to 231 (NM), Met-231, and 263 to 265 (SCA). 263–265 (SCA) lines the GTP pocket. The TGS domain occupies 303 to 386 (HLIYFFTAGP…QDADIIFFKF (84 aa)).

The protein belongs to the TRAFAC class OBG-HflX-like GTPase superfamily. OBG GTPase family. YchF/OLA1 subfamily. In terms of assembly, monomer (Potential). Interacts with GAP1. Mg(2+) is required as a cofactor.

Its subcellular location is the cytoplasm. The protein localises to the cell membrane. It is found in the cytosol. With respect to regulation, activated by GAP1. Functionally, hydrolyzes ATP, and can also hydrolyze GTP with lower efficiency. Has lower affinity for GTP (Potential). Exhibits GTPase activity. Exhibits similar binding affinities and hydrolytic activities toward both GTP and ATP. Binds to the 26 S ribosomal RNA in vitro, but not to the 5.8 S or 18 S rRNA. Confers sensitivity to salinity stress by suppressing the anti-oxidation enzymatic activities and increasing lipid peroxidation thus leading to the accumulation of reactive oxygen species (ROS). In Oryza sativa subsp. indica (Rice), this protein is Obg-like ATPase 1.